A 422-amino-acid chain; its full sequence is L-2-hydroxyglutarate dehydrogenase (422 aa).

The protein belongs to the L2HGDH family. It depends on FAD as a cofactor.

The protein localises to the cell inner membrane. The catalysed reaction is (S)-2-hydroxyglutarate + a quinone = a quinol + 2-oxoglutarate. The protein operates within amino-acid degradation. In terms of biological role, catalyzes the dehydrogenation of L-2-hydroxyglutarate (L2HG) to alpha-ketoglutarate and couples to the respiratory chain by feeding electrons from the reaction into the membrane quinone pool. Functions in a L-lysine degradation pathway that proceeds via cadaverine, glutarate and L-2-hydroxyglutarate. Also displays some oxidase activity in vitro on L-2-hydroxyglutarate with O2 as the electron acceptor, but this activity is most likely not physiological. This chain is L-2-hydroxyglutarate dehydrogenase, found in Escherichia coli O17:K52:H18 (strain UMN026 / ExPEC).